The primary structure comprises 355 residues: Green-sensitive opsin-1 (355 aa).

The Extracellular portion of the chain corresponds to 1–49; that stretch reads MAAHADEPVFAARRYNEETTRESAFVYTNANNTRDPFEGPNYHIAPRWV. A glycan (N-linked (GlcNAc...) asparagine) is linked at Asn31. The helical transmembrane segment at 50 to 74 threads the bilayer; that stretch reads YNLASLWMIIVVIASIFTNSLVIVA. Topologically, residues 75–86 are cytoplasmic; that stretch reads TAKFKKLRHPLN. A helical membrane pass occupies residues 87 to 112; that stretch reads WILVNLAIADLGETVLASTISVFNQV. At 113 to 126 the chain is on the extracellular side; it reads FGYFVLGHPMCIFE. A disulfide bridge links Cys123 with Cys200. Residues 127-146 traverse the membrane as a helical segment; sequence GWTVSVCGITALWSLTIISW. At 147 to 165 the chain is on the cytoplasmic side; it reads ERWVVVCKPFGNVKFDGKW. A helical membrane pass occupies residues 166–189; the sequence is AAGGIIFAWTWAIIWCTPPIFGWS. At 190–215 the chain is on the extracellular side; it reads RYWPHGLKTSCGPDVFSGSEDPGVAS. A helical membrane pass occupies residues 216–243; the sequence is YMVTLLLTCCILPLSVIIICYIFVWNAI. Topologically, residues 244–265 are cytoplasmic; sequence HQVAQQQKDSESTQKAEKEVSR. A helical membrane pass occupies residues 266-289; sequence MVVVMILAFILCWGPYASFATFSA. Residues 290–297 lie on the Extracellular side of the membrane; it reads LNPGYAWH. Residues 298-322 traverse the membrane as a helical segment; it reads PLAAALPAYFAKSATIYNPIIYVFM. Lys309 carries the post-translational modification N6-(retinylidene)lysine. At 323–355 the chain is on the cytoplasmic side; the sequence is NRQFRSCIMQLFGKKVEDASEVSGSTTEVSTAS.

Belongs to the G-protein coupled receptor 1 family. Opsin subfamily. The color pigments are found in the cone photoreceptor cells.

The protein localises to the membrane. In terms of biological role, visual pigments are the light-absorbing molecules that mediate vision. They consist of an apoprotein, opsin, covalently linked to cis-retinal. The protein is Green-sensitive opsin-1 (G103) of Psalidodon fasciatus (Banded astyanax).